We begin with the raw amino-acid sequence, 194 residues long: Glycerol-3-phosphate acyltransferase (194 aa).

5 consecutive transmembrane segments (helical) span residues 4 to 24 (EIVL…LLLA), 78 to 98 (EIWV…TVFL), 110 to 130 (LGVF…IFVF), 137 to 157 (YVSL…ALIE), and 161 to 181 (LLIT…RENI).

Belongs to the PlsY family. In terms of assembly, probably interacts with PlsX.

The protein resides in the cell inner membrane. It catalyses the reaction an acyl phosphate + sn-glycerol 3-phosphate = a 1-acyl-sn-glycero-3-phosphate + phosphate. It functions in the pathway lipid metabolism; phospholipid metabolism. Catalyzes the transfer of an acyl group from acyl-phosphate (acyl-PO(4)) to glycerol-3-phosphate (G3P) to form lysophosphatidic acid (LPA). This enzyme utilizes acyl-phosphate as fatty acyl donor, but not acyl-CoA or acyl-ACP. In Geotalea daltonii (strain DSM 22248 / JCM 15807 / FRC-32) (Geobacter daltonii), this protein is Glycerol-3-phosphate acyltransferase.